A 421-amino-acid polypeptide reads, in one-letter code: UDP-N-acetylglucosamine 1-carboxyvinyltransferase (421 aa).

Residue 22-23 (KN) coordinates phosphoenolpyruvate. Arg-93 is a binding site for UDP-N-acetyl-alpha-D-glucosamine. Cys-117 (proton donor) is an active-site residue. Position 117 is a 2-(S-cysteinyl)pyruvic acid O-phosphothioketal (Cys-117). Residues 122 to 126 (RPVDL), Asp-308, and Ile-330 each bind UDP-N-acetyl-alpha-D-glucosamine.

This sequence belongs to the EPSP synthase family. MurA subfamily.

Its subcellular location is the cytoplasm. It catalyses the reaction phosphoenolpyruvate + UDP-N-acetyl-alpha-D-glucosamine = UDP-N-acetyl-3-O-(1-carboxyvinyl)-alpha-D-glucosamine + phosphate. It participates in cell wall biogenesis; peptidoglycan biosynthesis. Cell wall formation. Adds enolpyruvyl to UDP-N-acetylglucosamine. This is UDP-N-acetylglucosamine 1-carboxyvinyltransferase from Pseudomonas syringae pv. tomato (strain ATCC BAA-871 / DC3000).